The chain runs to 470 residues: Phosphoribosylamine--glycine ligase (470 aa).

Residues 115-354 form the ATP-grasp domain; sequence KDFLKRIGVP…MAEISMAVVE (240 aa). Position 142–203 (142–203) interacts with ATP; it reads REKFNNGIVV…EERLRGIEVA (62 aa). Mg(2+) is bound by residues Glu-324 and Asn-326.

Belongs to the GARS family. Requires Mg(2+) as cofactor. The cofactor is Mn(2+).

The catalysed reaction is 5-phospho-beta-D-ribosylamine + glycine + ATP = N(1)-(5-phospho-beta-D-ribosyl)glycinamide + ADP + phosphate + H(+). It functions in the pathway purine metabolism; IMP biosynthesis via de novo pathway; N(1)-(5-phospho-D-ribosyl)glycinamide from 5-phospho-alpha-D-ribose 1-diphosphate: step 2/2. The polypeptide is Phosphoribosylamine--glycine ligase (purD) (Archaeoglobus fulgidus (strain ATCC 49558 / DSM 4304 / JCM 9628 / NBRC 100126 / VC-16)).